Reading from the N-terminus, the 575-residue chain is Septation ring formation regulator EzrA (575 aa).

The Extracellular segment spans residues 1 to 8; sequence MSNGQLIY. A helical transmembrane segment spans residues 9 to 27; that stretch reads LMVAIAVILVLAYVVAIFL. Over 28 to 575 the chain is Cytoplasmic; sequence RKRNEGRLEA…YEKTRETIRF (548 aa). 4 coiled-coil regions span residues 110 to 191, 265 to 301, 354 to 416, and 456 to 526; these read QIDQ…FVTL, LYEA…LYDI, VRRI…IEKD, and TASN…IQEA.

Belongs to the EzrA family.

Its subcellular location is the cell membrane. Its function is as follows. Negative regulator of FtsZ ring formation; modulates the frequency and position of FtsZ ring formation. Inhibits FtsZ ring formation at polar sites. Interacts either with FtsZ or with one of its binding partners to promote depolymerization. This chain is Septation ring formation regulator EzrA, found in Streptococcus pneumoniae (strain JJA).